The sequence spans 336 residues: F420-dependent glucose-6-phosphate dehydrogenase (336 aa).

Aspartate 39 provides a ligand contact to coenzyme F420-(gamma-Glu)n. The active-site Proton donor is histidine 40. Coenzyme F420-(gamma-Glu)n contacts are provided by residues threonine 76 and 107–108; that span reads TG. The Proton acceptor role is filled by glutamate 109. Residues asparagine 112, 177–178, and 180–181 each bind coenzyme F420-(gamma-Glu)n; these read GG and AV. Substrate-binding residues include threonine 195, lysine 198, lysine 259, and arginine 283.

It belongs to the F420-dependent glucose-6-phosphate dehydrogenase family. As to quaternary structure, homodimer.

It catalyses the reaction oxidized coenzyme F420-(gamma-L-Glu)(n) + D-glucose 6-phosphate + H(+) = 6-phospho-D-glucono-1,5-lactone + reduced coenzyme F420-(gamma-L-Glu)(n). Catalyzes the coenzyme F420-dependent oxidation of glucose 6-phosphate (G6P) to 6-phosphogluconolactone. Appears to have a role in resistance to oxidative stress, via its consumption of G6P that serves as a source of reducing power to combat oxidative stress in mycobacteria. The polypeptide is F420-dependent glucose-6-phosphate dehydrogenase (Mycobacterium avium (strain 104)).